The chain runs to 132 residues: Small heat shock protein hspL (132 aa).

In terms of domain architecture, sHSP spans 15 to 131 (TFTNFVSAPV…VKMSNNNKVE (117 aa)).

Belongs to the small heat shock protein (HSP20) family.

The protein is Small heat shock protein hspL (hspL) of Dictyostelium discoideum (Social amoeba).